The following is a 1178-amino-acid chain: Tricalbin-2 (1178 aa).

Residues 1–17 (MSPNSSKTRTDQISSMP) show a composition bias toward polar residues. The interval 1-27 (MSPNSSKTRTDQISSMPGINEATKVES) is disordered. Residues 1–98 (MSPNSSKTRT…NLLPDKFYGD (98 aa)) lie on the Cytoplasmic side of the membrane. The helical transmembrane segment at 99–119 (WYHEVAILIIAGLCSFVLGYF) threads the bilayer. Residue lysine 120 is a topological domain, extracellular. The chain crosses the membrane as a helical span at residues 121-141 (FSLASVLIVMLTTGMLYRTSS). Over 142-1178 (KKYRESLRDL…TGDKKSEEKQ (1037 aa)) the chain is Cytoplasmic. The region spanning 164–367 (DYESVEWLNT…PPFSLQLNIP (204 aa)) is the SMP-LTD domain. 3 C2 domains span residues 358-481 (PPFS…EKVH), 504-628 (PKKL…LKVT), and 632-749 (RPVD…DKYT). Residues 784-821 (LSLEEAKEVDEINEKKDKLEKQKSTLDDKNISKEEKER) adopt a coiled-coil conformation. Residues 962 to 1086 (QVSWFPVTAT…DPESDTTFNI (125 aa)) form the C2 4 domain. Serine 991 bears the Phosphoserine mark.

The protein belongs to the tricalbin family. As to quaternary structure, interacts with TCB1 and TCB3 via its C-terminal domain.

It localises to the cell membrane. It is found in the endoplasmic reticulum membrane. Functionally, may play a role in membrane trafficking. The sequence is that of Tricalbin-2 (TCB2) from Saccharomyces cerevisiae (strain ATCC 204508 / S288c) (Baker's yeast).